We begin with the raw amino-acid sequence, 174 residues long: ATP synthase subunit b 2 (174 aa).

Residues 27–47 form a helical membrane-spanning segment; it reads IFWLIITLVAIYLILTKVALP.

Belongs to the ATPase B chain family. F-type ATPases have 2 components, F(1) - the catalytic core - and F(0) - the membrane proton channel. F(1) has five subunits: alpha(3), beta(3), gamma(1), delta(1), epsilon(1). F(0) has three main subunits: a(1), b(2) and c(10-14). The alpha and beta chains form an alternating ring which encloses part of the gamma chain. F(1) is attached to F(0) by a central stalk formed by the gamma and epsilon chains, while a peripheral stalk is formed by the delta and b chains.

The protein resides in the cell inner membrane. Functionally, f(1)F(0) ATP synthase produces ATP from ADP in the presence of a proton or sodium gradient. F-type ATPases consist of two structural domains, F(1) containing the extramembraneous catalytic core and F(0) containing the membrane proton channel, linked together by a central stalk and a peripheral stalk. During catalysis, ATP synthesis in the catalytic domain of F(1) is coupled via a rotary mechanism of the central stalk subunits to proton translocation. Its function is as follows. Component of the F(0) channel, it forms part of the peripheral stalk, linking F(1) to F(0). The b'-subunit is a diverged and duplicated form of b found in plants and photosynthetic bacteria. The polypeptide is ATP synthase subunit b 2 (atpF2) (Dinoroseobacter shibae (strain DSM 16493 / NCIMB 14021 / DFL 12)).